The following is a 255-amino-acid chain: Mediator of RNA polymerase II transcription subunit 18 (255 aa).

The protein belongs to the Mediator complex subunit 18 family. Component of the Mediator complex.

The protein localises to the nucleus. In terms of biological role, component of the Mediator complex, a coactivator involved in the regulated transcription of nearly all RNA polymerase II-dependent genes. Mediator functions as a bridge to convey information from gene-specific regulatory proteins to the basal RNA polymerase II transcription machinery. Mediator is recruited to promoters by direct interactions with regulatory proteins and serves as a scaffold for the assembly of a functional preinitiation complex with RNA polymerase II and the general transcription factors. This is Mediator of RNA polymerase II transcription subunit 18 (SRB5) from Kluyveromyces lactis (strain ATCC 8585 / CBS 2359 / DSM 70799 / NBRC 1267 / NRRL Y-1140 / WM37) (Yeast).